Here is a 909-residue protein sequence, read N- to C-terminus: UPF0182 protein H16_A1615 (909 aa).

Helical transmembrane passes span 16-36 (TWVV…GLVV), 58-78 (ALLF…SGWL), 114-134 (VAVL…AIAL), 169-189 (WLLL…GLRG), 205-225 (ATHG…SYWL), 246-266 (VHVG…AAAA), and 281-301 (AAAL…PALF).

It belongs to the UPF0182 family.

Its subcellular location is the cell membrane. The polypeptide is UPF0182 protein H16_A1615 (Cupriavidus necator (strain ATCC 17699 / DSM 428 / KCTC 22496 / NCIMB 10442 / H16 / Stanier 337) (Ralstonia eutropha)).